Here is a 451-residue protein sequence, read N- to C-terminus: MALQNIGASNRDDAFYRYKMPRMITKIEGRGNGIKTNVVNMVDIAKALARPASYTTKYFGCELGAQSKFDEKTGISLVNGAHDTAKLAGLLEVFIKKYVQCYGCGNPETEILISKTQMISLKCAACGFVSDVDMRDKLTTFILKNPPEQKKGGKDKKAMRRAEKERLKEGEAADEEQKKLKKDAKKKGSKDSTAKGLKKKATTATGSDEDHSSSPTRSHDGDKAAADDDDDDVQWQTDTSIEAAKQRMQEQLSAATAEMVMLSTEETEKKMKQPTHKDGSTNGSAKEIPNDKPAVTKPSPYEELIGDIKASLGSAPTPSQLKAVLASSTLPPQDVMNAPLEALFGGVGKGFTKEVVKNKKYLAVAVPDEGAQTLLVQAIEAFGGKCNPEALKEVPVVLKALYDGDILDEETIVDWYNDAVAAGKDSQVVKNAKPFVEWLQSAESDEEGDDE.

29–36 (GRGNGIKT) lines the GTP pocket. Disordered regions lie at residues 143–233 (LKNP…DDDV) and 263–299 (STEETEKKMKQPTHKDGSTNGSAKEIPNDKPAVTKPS). The segment covering 147–178 (PEQKKGGKDKKAMRRAEKERLKEGEAADEEQK) has biased composition (basic and acidic residues). Residues 179-188 (KLKKDAKKKG) show a composition bias toward basic residues. 2 stretches are compositionally biased toward basic and acidic residues: residues 208-226 (DEDHSSSPTRSHDGDKAAA) and 266-279 (ETEKKMKQPTHKDG). Residues 290–449 (NDKPAVTKPS…QSAESDEEGD (160 aa)) form the W2 domain.

It belongs to the eIF-2-beta/eIF-5 family.

In terms of biological role, catalyzes the hydrolysis of GTP bound to the 40S ribosomal initiation complex (40S.mRNA.Met-tRNA[F].eIF-2.GTP) with the subsequent joining of a 60S ribosomal subunit resulting in the release of eIF-2 and the guanine nucleotide. The subsequent joining of a 60S ribosomal subunit results in the formation of a functional 80S initiation complex (80S.mRNA.Met-tRNA[F]). This is Eukaryotic translation initiation factor 5 (EIF5) from Zea mays (Maize).